A 252-amino-acid polypeptide reads, in one-letter code: Two-component response regulator ORR2 (252 aa).

The 151-residue stretch at 7-157 folds into the Response regulatory domain; that stretch reads RVLVVDDSPV…DVQRLRKCSG (151 aa). The residue at position 90 (D90) is a 4-aspartylphosphate.

Belongs to the ARR family. Type-A subfamily. Post-translationally, two-component system major event consists of a His-to-Asp phosphorelay between a sensor histidine kinase (HK) and a response regulator (RR). In plants, the His-to-Asp phosphorelay involves an additional intermediate named Histidine-containing phosphotransfer protein (HPt). This multistep phosphorelay consists of a His-Asp-His-Asp sequential transfer of a phosphate group between first a His and an Asp of the HK protein, followed by the transfer to a conserved His of the HPt protein and finally the transfer to an Asp in the receiver domain of the RR protein. Expressed in mature leaves and flowers, and at low levels in roots and shoots.

Its function is as follows. Functions as a response regulator involved in His-to-Asp phosphorelay signal transduction system. Phosphorylation of the Asp residue in the receiver domain activates the ability of the protein to promote the transcription of target genes. Type-A response regulators seem to act as negative regulators of the cytokinin signaling. The chain is Two-component response regulator ORR2 from Oryza sativa subsp. indica (Rice).